Consider the following 616-residue polypeptide: UvrABC system protein C (616 aa).

Residues 21-99 form the GIY-YIG domain; sequence HQPGVYRMYD…IKLYLPKYNV (79 aa). Residues 209–244 enclose the UVR domain; the sequence is RQVIASLVEKMEQASQSLNFEQAATFRDQIQALRRV.

The protein belongs to the UvrC family. In terms of assembly, interacts with UvrB in an incision complex.

The protein localises to the cytoplasm. In terms of biological role, the UvrABC repair system catalyzes the recognition and processing of DNA lesions. UvrC both incises the 5' and 3' sides of the lesion. The N-terminal half is responsible for the 3' incision and the C-terminal half is responsible for the 5' incision. This chain is UvrABC system protein C, found in Photobacterium profundum (strain SS9).